The sequence spans 267 residues: Protein I267L (267 aa).

The protein belongs to the asfivirus I267L family. Interacts with host RNF135.

Its function is as follows. Plays a role in the inhibition of host RNA Pol-III-RIGI-mediated innate antiviral response. Mechanistically, interacts with host E3 ubiquitin ligase RNF135, disrupting RNF135-RIGI interaction and impairing RNF135-mediated 'Lys-63'-polyubiquitination and activation of RIGI. The polypeptide is Protein I267L (African swine fever virus (strain Badajoz 1971 Vero-adapted) (Ba71V)).